Reading from the N-terminus, the 520-residue chain is Translation initiation factor IF3-1, mitochondrial (520 aa).

The N-terminal 66 residues, 1–66 (MAIWRIINRS…SNIFQNLRFL (66 aa)), are a transit peptide targeting the mitochondrion. Residues 271–282 (ARVKEESPKPDS) show a composition bias toward basic and acidic residues. The interval 271–520 (ARVKEESPKP…YGIFSTPKTK (250 aa)) is disordered. Residues 336–361 (EPQSPNQHVNPQRPRFSNQAPNQQPT) are compositionally biased toward polar residues. Residues 369 to 379 (PNQPPSAPRPQ) show a composition bias toward pro residues. Composition is skewed to polar residues over residues 404–422 (NQAPNQQSTGRFNPQFPNQ) and 458–468 (FQNQAPNQQPT). Residues 473–485 (PQPPNPPRAPPRP) are compositionally biased toward pro residues.

The protein belongs to the IF-3 family. In terms of assembly, monomer.

It is found in the mitochondrion. Functionally, IF-3 binds to the 30S ribosomal subunit and shifts the equilibrium between 70S ribosomes and their 50S and 30S subunits in favor of the free subunits, thus enhancing the availability of 30S subunits on which protein synthesis initiation begins. The polypeptide is Translation initiation factor IF3-1, mitochondrial (Arabidopsis thaliana (Mouse-ear cress)).